We begin with the raw amino-acid sequence, 662 residues long: Histidine decarboxylase (662 aa).

Residues Tyr-88 and His-201 each contribute to the substrate site. Lys-312 carries the N6-(pyridoxal phosphate)lysine modification. Residues 489 to 518 are disordered; sequence QPSPRAKNVIPPPPGTRGLSLESVSEGGDD.

It belongs to the group II decarboxylase family. Homodimer. It depends on pyridoxal 5'-phosphate as a cofactor.

It catalyses the reaction L-histidine + H(+) = histamine + CO2. It functions in the pathway amine and polyamine biosynthesis; histamine biosynthesis; histamine from L-histidine: step 1/1. Catalyzes the biosynthesis of histamine from histidine. In Mus musculus (Mouse), this protein is Histidine decarboxylase (Hdc).